A 688-amino-acid polypeptide reads, in one-letter code: Polyphosphate kinase (688 aa).

Asn45 is an ATP binding site. The Mg(2+) site is built by Arg375 and Arg405. Residues 430-464 form the PLD phosphodiesterase domain; sequence PGLKIHAKLFLISRKENGEVVRYAHIGTGNFNEKT. His435 functions as the Phosphohistidine intermediate in the catalytic mechanism. Residues Tyr468, Arg564, and His592 each contribute to the ATP site.

It belongs to the polyphosphate kinase 1 (PPK1) family. Requires Mg(2+) as cofactor. An intermediate of this reaction is the autophosphorylated ppk in which a phosphate is covalently linked to a histidine residue through a N-P bond.

The enzyme catalyses [phosphate](n) + ATP = [phosphate](n+1) + ADP. Its function is as follows. Catalyzes the reversible transfer of the terminal phosphate of ATP to form a long-chain polyphosphate (polyP). This chain is Polyphosphate kinase, found in Escherichia coli O6:H1 (strain CFT073 / ATCC 700928 / UPEC).